The sequence spans 64 residues: Large ribosomal subunit protein uL29 (64 aa).

It belongs to the universal ribosomal protein uL29 family.

This chain is Large ribosomal subunit protein uL29, found in Porphyromonas gingivalis (strain ATCC 33277 / DSM 20709 / CIP 103683 / JCM 12257 / NCTC 11834 / 2561).